The following is a 449-amino-acid chain: Protein adenylyltransferase FICD (449 aa).

Residues 15 to 35 (LLWGWGPILFGLLGSVFVLLL) traverse the membrane as a helical segment. TPR repeat units follow at residues 96 to 129 (AKAA…NPEF) and 130 to 163 (VEAL…SPCH). An Inhibitory (S/T)XXXE(G/N) motif motif is present at residues 220 to 225 (TVAIEG). ATP-binding positions include Glu-224, 250–251 (EQ), 358–360 (GNG), and Arg-364. One can recognise a Fido domain in the interval 275–410 (ITVNDILEIH…VRPFIRFIAK (136 aa)).

The protein belongs to the fic family.

It localises to the membrane. The enzyme catalyses L-tyrosyl-[protein] + ATP = O-(5'-adenylyl)-L-tyrosyl-[protein] + diphosphate. It carries out the reaction L-threonyl-[protein] + ATP = 3-O-(5'-adenylyl)-L-threonyl-[protein] + diphosphate. Its activity is regulated as follows. Adenylyltransferase activity is inhibited by the inhibitory helix present at the N-terminus: Glu-224 binds ATP and competes with ATP-binding at Arg-364, thereby preventing adenylyltransferase activity. Activation dissociates ATP-binding from Glu-224, allowing ordered binding of the entire ATP moiety with the alpha-phosphate in an orientation that is productive for accepting an incoming target hydroxyl side chain. Its function is as follows. Adenylyltransferase that mediates the addition of adenosine 5'-monophosphate (AMP) to specific residues of target proteins. The polypeptide is Protein adenylyltransferase FICD (ficd) (Danio rerio (Zebrafish)).